Reading from the N-terminus, the 357-residue chain is Peptide chain release factor 1 (357 aa).

The residue at position 232 (glutamine 232) is an N5-methylglutamine.

The protein belongs to the prokaryotic/mitochondrial release factor family. Post-translationally, methylated by PrmC. Methylation increases the termination efficiency of RF1.

The protein localises to the cytoplasm. Functionally, peptide chain release factor 1 directs the termination of translation in response to the peptide chain termination codons UAG and UAA. This chain is Peptide chain release factor 1, found in Nitratidesulfovibrio vulgaris (strain ATCC 29579 / DSM 644 / CCUG 34227 / NCIMB 8303 / VKM B-1760 / Hildenborough) (Desulfovibrio vulgaris).